The chain runs to 288 residues: Syntaxin PEP12 (288 aa).

Topologically, residues 1–268 are cytoplasmic; it reads MSEDEFFGGD…RYQKRTSRWR (268 aa). Residues Ser-2 and Ser-23 each carry the phosphoserine modification. In terms of domain architecture, t-SNARE coiled-coil homology spans 195–257; the sequence is QNLIEQRDQE…QLASDELRKA (63 aa). Residues 269–288 form a helical; Anchor for type IV membrane protein membrane-spanning segment; that stretch reads VYLLIVLLVMLLFIFLIMKL.

It belongs to the syntaxin family. In terms of processing, ubiquitinated.

It is found in the membrane. Functionally, plays a role in the sorting and targeting of vacuolar proteases. In Saccharomyces cerevisiae (strain ATCC 204508 / S288c) (Baker's yeast), this protein is Syntaxin PEP12 (PEP12).